We begin with the raw amino-acid sequence, 235 residues long: Phosphoribosylaminoimidazole-succinocarboxamide synthase (235 aa).

The protein belongs to the SAICAR synthetase family.

The enzyme catalyses 5-amino-1-(5-phospho-D-ribosyl)imidazole-4-carboxylate + L-aspartate + ATP = (2S)-2-[5-amino-1-(5-phospho-beta-D-ribosyl)imidazole-4-carboxamido]succinate + ADP + phosphate + 2 H(+). It functions in the pathway purine metabolism; IMP biosynthesis via de novo pathway; 5-amino-1-(5-phospho-D-ribosyl)imidazole-4-carboxamide from 5-amino-1-(5-phospho-D-ribosyl)imidazole-4-carboxylate: step 1/2. This Clostridium novyi (strain NT) protein is Phosphoribosylaminoimidazole-succinocarboxamide synthase.